The primary structure comprises 89 residues: Small ribosomal subunit protein uS15 (89 aa).

It belongs to the universal ribosomal protein uS15 family. As to quaternary structure, part of the 30S ribosomal subunit. Forms a bridge to the 50S subunit in the 70S ribosome, contacting the 23S rRNA.

In terms of biological role, one of the primary rRNA binding proteins, it binds directly to 16S rRNA where it helps nucleate assembly of the platform of the 30S subunit by binding and bridging several RNA helices of the 16S rRNA. Functionally, forms an intersubunit bridge (bridge B4) with the 23S rRNA of the 50S subunit in the ribosome. This is Small ribosomal subunit protein uS15 from Shewanella baltica (strain OS223).